A 491-amino-acid chain; its full sequence is Serine/threonine-protein kinase 33 (491 aa).

The disordered stretch occupies residues Phe51 to Ser89. A compositionally biased stretch (basic and acidic residues) spans Gln54–Pro82. The region spanning Tyr111–Leu377 is the Protein kinase domain. Residues Leu117 to Val125 and Lys140 contribute to the ATP site. Asp233 acts as the Proton acceptor in catalysis. The interval Lys398–Leu491 is disordered. A compositionally biased stretch (acidic residues) spans Glu402–Glu414. Ser403 is subject to Phosphoserine. The span at Gln415–Asn431 shows a compositional bias: polar residues. Low complexity predominate over residues Ser445–Glu457. Polar residues predominate over residues Ala475–Leu484.

This sequence belongs to the protein kinase superfamily. CAMK Ser/Thr protein kinase family. CaMK subfamily. Homodimer. In terms of processing, autophosphorylated. In terms of tissue distribution, highly expressed in testis, particularly in cells from the spermatogenic epithelia. Present in meiotic and post meiotic sperm cells. Significant expression is detected in lung epithelia, alveolar macrophages, horizontal cells in the retina and in embryonic organs such as heart, brain and spinal cord. Also expressed in pituitary gland, kidney, pancreas, trachea and thyroid gland.

The protein resides in the cytoplasm. Its subcellular location is the cytoskeleton. It is found in the perinuclear region. The catalysed reaction is L-seryl-[protein] + ATP = O-phospho-L-seryl-[protein] + ADP + H(+). It catalyses the reaction L-threonyl-[protein] + ATP = O-phospho-L-threonyl-[protein] + ADP + H(+). Specifically inhibited by CDD-2807 ((3-([1,1'-Biphenyl]-2-ylethynyl)-1H-indazol-5-yl)(2,6-diazaspiro[3.5]nonan-2-yl)methanone). CDD-2807 is a potential male contraceptive drug: it is not toxic, efficiently crosses the blood-testis barrier and induces a reversible contraceptive effect in male mice. In terms of biological role, serine/threonine protein kinase required for spermatid differentiation and male fertility. Promotes sperm flagella assembly during spermatogenesis by mediating phosphorylation of fibrous sheath proteins AKAP3 and AKAP4. Also phosphorylates vimentin/VIM, thereby regulating the dynamic behavior of the intermediate filament cytoskeleton. The protein is Serine/threonine-protein kinase 33 of Mus musculus (Mouse).